A 179-amino-acid chain; its full sequence is Pyridoxal 5'-phosphate synthase subunit PdxT (179 aa).

48–50 (GES) lines the L-glutamine pocket. The active-site Nucleophile is C79. Residues R101 and 127 to 128 (IR) each bind L-glutamine. Catalysis depends on charge relay system residues H163 and E165.

The protein belongs to the glutaminase PdxT/SNO family. In terms of assembly, in the presence of PdxS, forms a dodecamer of heterodimers. Only shows activity in the heterodimer.

It carries out the reaction aldehydo-D-ribose 5-phosphate + D-glyceraldehyde 3-phosphate + L-glutamine = pyridoxal 5'-phosphate + L-glutamate + phosphate + 3 H2O + H(+). The catalysed reaction is L-glutamine + H2O = L-glutamate + NH4(+). It participates in cofactor biosynthesis; pyridoxal 5'-phosphate biosynthesis. Functionally, catalyzes the hydrolysis of glutamine to glutamate and ammonia as part of the biosynthesis of pyridoxal 5'-phosphate. The resulting ammonia molecule is channeled to the active site of PdxS. The polypeptide is Pyridoxal 5'-phosphate synthase subunit PdxT (Francisella tularensis subsp. tularensis (strain FSC 198)).